The chain runs to 425 residues: Perilipin-2 (425 aa).

N-acetylalanine is present on alanine 2. Serine 213 carries the post-translational modification Phosphoserine. Position 230 is a phosphotyrosine (tyrosine 230).

It belongs to the perilipin family. In terms of assembly, interacts with IRGC. Acylated; primarily with C14, C16 and C18 fatty acids. Post-translationally, phosphorylation at Tyr-230 by isoform 1 of CHKA (CHKalpha2) promotes dissociation from lipid droplets: dissociation is followed by recruitment of autophagosome machinery to lipid droplets and subsequent lipid droplet lipolysis. In terms of processing, polyubiquitination of Nt-acetylatable A-PLIN2 by MARCHF6 lead to degradation by 26S proteasomes. As to expression, adipose tissue specific. Expressed abundantly and preferentially in fat pads.

The protein localises to the membrane. Its subcellular location is the lipid droplet. In terms of biological role, structural component of lipid droplets, which is required for the formation and maintenance of lipid storage droplets. The sequence is that of Perilipin-2 from Mus musculus (Mouse).